Reading from the N-terminus, the 103-residue chain is NAD(P)H-quinone oxidoreductase subunit 4L, organellar chromatophore (103 aa).

3 consecutive transmembrane segments (helical) span residues 3–23 (IMLE…VWGL), 32–52 (VLMS…AFSN), and 63–83 (VFAI…LAIL).

The protein belongs to the complex I subunit 4L family. As to quaternary structure, NDH is composed of at least 16 different subunits, 5 of which are encoded in the nucleus.

It is found in the plastid. The protein resides in the organellar chromatophore thylakoid membrane. The enzyme catalyses a plastoquinone + NADH + (n+1) H(+)(in) = a plastoquinol + NAD(+) + n H(+)(out). The catalysed reaction is a plastoquinone + NADPH + (n+1) H(+)(in) = a plastoquinol + NADP(+) + n H(+)(out). Functionally, NDH shuttles electrons from NAD(P)H:plastoquinone, via FMN and iron-sulfur (Fe-S) centers, to quinones in the photosynthetic chain and possibly in a chloroplast respiratory chain. The immediate electron acceptor for the enzyme in this species is believed to be plastoquinone. Couples the redox reaction to proton translocation, and thus conserves the redox energy in a proton gradient. In Paulinella chromatophora, this protein is NAD(P)H-quinone oxidoreductase subunit 4L, organellar chromatophore.